Consider the following 115-residue polypeptide: Large ribosomal subunit protein bL19 (115 aa).

The protein belongs to the bacterial ribosomal protein bL19 family.

This protein is located at the 30S-50S ribosomal subunit interface and may play a role in the structure and function of the aminoacyl-tRNA binding site. In Aeromonas hydrophila subsp. hydrophila (strain ATCC 7966 / DSM 30187 / BCRC 13018 / CCUG 14551 / JCM 1027 / KCTC 2358 / NCIMB 9240 / NCTC 8049), this protein is Large ribosomal subunit protein bL19.